A 219-amino-acid polypeptide reads, in one-letter code: MDRQVKGILGAKLGMTQVWDNNRVVPVTVVQAGPCVVSQVRSHQKDGYAAVQLAYGAIDPRKVKKPISGHYTKADVAPRRHIVELRTTDAAEYSLGQEVTVEQFPAGISVDVTGKTKGKGYAGPMKRHGFHGLRASHGVERKHRSPGSIGGCATPGRVFKGTRMAGRMGGVRYTVQNLTVQAVDTENNLLLVRGAIPGPKGALVLVRTAAKAKKGGAAK.

This sequence belongs to the universal ribosomal protein uL3 family. As to quaternary structure, part of the 50S ribosomal subunit. Forms a cluster with proteins L14 and L19.

Functionally, one of the primary rRNA binding proteins, it binds directly near the 3'-end of the 23S rRNA, where it nucleates assembly of the 50S subunit. The polypeptide is Large ribosomal subunit protein uL3 (Salinispora arenicola (strain CNS-205)).